We begin with the raw amino-acid sequence, 594 residues long: Cryptochrome-2 (594 aa).

One can recognise a Photolyase/cryptochrome alpha/beta domain in the interval 21 to 150 (ASSVHWFRKG…EVVTENSHTL (130 aa)). Lys29 is covalently cross-linked (Glycyl lysine isopeptide (Lys-Gly) (interchain with G-Cter in ubiquitin)). A Phosphoserine modification is found at Ser89. Glycyl lysine isopeptide (Lys-Gly) (interchain with G-Cter in ubiquitin) cross-links involve residues Lys125 and Lys241. Phosphoserine; by MAPK is present on Ser265. Ser270 is a binding site for FAD. At Ser298 the chain carries Phosphoserine. FAD is bound at residue Gln307. Residue Lys347 forms a Glycyl lysine isopeptide (Lys-Gly) (interchain with G-Cter in ubiquitin) linkage. FAD-binding positions include His373 and 405–407 (DAD). Residues 389-488 (WVSWESGVRV…IIGVDYPRPI (100 aa)) are required for inhibition of CLOCK-BMAL1-mediated transcription. Residues Lys474 and Lys503 each participate in a glycyl lysine isopeptide (Lys-Gly) (interchain with G-Cter in ubiquitin) cross-link. The tract at residues 532–594 (VAEPGSSQAG…PAQEPPSKDS (63 aa)) is disordered. Residues 536–547 (GSSQAGSISNTG) show a composition bias toward polar residues. Ser553 is subject to Phosphoserine; by GSK3-beta. Position 557 is a phosphoserine; by DYRK1A and MAPK (Ser557).

This sequence belongs to the DNA photolyase class-1 family. In terms of assembly, component of the circadian core oscillator, which includes the CRY proteins, CLOCK or NPAS2, BMAL1 or BMAL2, CSNK1D and/or CSNK1E, TIMELESS, and the PER proteins. Interacts with TIMELESS. Interacts directly with PER1, PER2 and PER3; interaction with PER2 inhibits its ubiquitination and vice versa. Interacts with CLOCK-BMAL1. Interacts with CLOCK. Interacts with BMAL1. Interacts with NFIL3. Interacts with FBXL3 and FBXL21. FBXL3, PER2 and the cofactor FAD compete for overlapping binding sites. FBXL3 cannot bind CRY2 that interacts already with PER2 or that contains bound FAD. Interacts with PPP5C (via TPR repeats); the interaction down-regulates the PPP5C phosphatase activity on CSNK1E. Interacts with nuclear receptors AR and NR3C1/GR; the interaction is ligand dependent. Interacts with PRKDC and CIART. Interacts with DDB1, USP7 and TARDBP. Interacts with HNF4A and PPARA. Interacts with PPARD (via domain NR LBD) and NR1I2 (via domain NR LBD) in a ligand-dependent manner. Interacts with PPARG, NR1I3 and VDR in a ligand-dependent manner. FAD serves as cofactor. The cofactor is (6R)-5,10-methylene-5,6,7,8-tetrahydrofolate. Phosphorylation on Ser-265 by MAPK is important for the inhibition of CLOCK-BMAL1-mediated transcriptional activity. Phosphorylation by CSKNe requires interaction with PER1 or PER2. Phosphorylated in a circadian manner at Ser-553 and Ser-557 in the suprachiasmatic nucleus (SCN) and liver. Phosphorylation at Ser-557 by DYRK1A promotes subsequent phosphorylation at Ser-553 by GSK3-beta: the two-step phosphorylation at the neighboring Ser residues leads to its proteasomal degradation. Post-translationally, ubiquitinated by the SCF(FBXL3) and SCF(FBXL21) complexes, regulating the balance between degradation and stabilization. The SCF(FBXL3) complex is mainly nuclear and mediates ubiquitination and subsequent degradation of CRY2. In contrast, cytoplasmic SCF(FBXL21) complex-mediated ubiquitination leads to stabilize CRY2 and counteract the activity of the SCF(FBXL3) complex. The SCF(FBXL3) and SCF(FBXL21) complexes probably mediate ubiquitination at different Lys residues. The SCF(FBXL3) complex recognizes and binds CRY2 phosphorylated at Ser-553 and Ser-557. Ubiquitination may be inhibited by PER2. Deubiquitinated by USP7. As to expression, expressed in all tissues examined including heart, cerebellum, cerebral cortex, lung, liver, muscle, kidney and ovary. Highest levels in heart, liver and ovary. Highly expressed in the suprachiasmatic nucleus (SCN).

The protein resides in the cytoplasm. The protein localises to the nucleus. Functionally, transcriptional repressor which forms a core component of the circadian clock. The circadian clock, an internal time-keeping system, regulates various physiological processes through the generation of approximately 24 hour circadian rhythms in gene expression, which are translated into rhythms in metabolism and behavior. It is derived from the Latin roots 'circa' (about) and 'diem' (day) and acts as an important regulator of a wide array of physiological functions including metabolism, sleep, body temperature, blood pressure, endocrine, immune, cardiovascular, and renal function. Consists of two major components: the central clock, residing in the suprachiasmatic nucleus (SCN) of the brain, and the peripheral clocks that are present in nearly every tissue and organ system. Both the central and peripheral clocks can be reset by environmental cues, also known as Zeitgebers (German for 'timegivers'). The predominant Zeitgeber for the central clock is light, which is sensed by retina and signals directly to the SCN. The central clock entrains the peripheral clocks through neuronal and hormonal signals, body temperature and feeding-related cues, aligning all clocks with the external light/dark cycle. Circadian rhythms allow an organism to achieve temporal homeostasis with its environment at the molecular level by regulating gene expression to create a peak of protein expression once every 24 hours to control when a particular physiological process is most active with respect to the solar day. Transcription and translation of core clock components (CLOCK, NPAS2, BMAL1, BMAL2, PER1, PER2, PER3, CRY1 and CRY2) plays a critical role in rhythm generation, whereas delays imposed by post-translational modifications (PTMs) are important for determining the period (tau) of the rhythms (tau refers to the period of a rhythm and is the length, in time, of one complete cycle). A diurnal rhythm is synchronized with the day/night cycle, while the ultradian and infradian rhythms have a period shorter and longer than 24 hours, respectively. Disruptions in the circadian rhythms contribute to the pathology of cardiovascular diseases, cancer, metabolic syndromes and aging. A transcription/translation feedback loop (TTFL) forms the core of the molecular circadian clock mechanism. Transcription factors, CLOCK or NPAS2 and BMAL1 or BMAL2, form the positive limb of the feedback loop, act in the form of a heterodimer and activate the transcription of core clock genes and clock-controlled genes (involved in key metabolic processes), harboring E-box elements (5'-CACGTG-3') within their promoters. The core clock genes: PER1/2/3 and CRY1/2 which are transcriptional repressors form the negative limb of the feedback loop and interact with the CLOCK|NPAS2-BMAL1|BMAL2 heterodimer inhibiting its activity and thereby negatively regulating their own expression. This heterodimer also activates nuclear receptors NR1D1/2 and RORA/B/G, which form a second feedback loop and which activate and repress BMAL1 transcription, respectively. CRY1 and CRY2 have redundant functions but also differential and selective contributions at least in defining the pace of the SCN circadian clock and its circadian transcriptional outputs. Less potent transcriptional repressor in cerebellum and liver than CRY1, though less effective in lengthening the period of the SCN oscillator. Seems to play a critical role in tuning SCN circadian period by opposing the action of CRY1. With CRY1, dispensable for circadian rhythm generation but necessary for the development of intercellular networks for rhythm synchrony. May mediate circadian regulation of cAMP signaling and gluconeogenesis by blocking glucagon-mediated increases in intracellular cAMP concentrations and in CREB1 phosphorylation. Besides its role in the maintenance of the circadian clock, is also involved in the regulation of other processes. Plays a key role in glucose and lipid metabolism modulation, in part, through the transcriptional regulation of genes involved in these pathways, such as LEP or ACSL4. Represses glucocorticoid receptor NR3C1/GR-induced transcriptional activity by binding to glucocorticoid response elements (GREs). Represses the CLOCK-BMAL1 induced transcription of BHLHE40/DEC1 and NAMPT. Represses PPARD and its target genes in the skeletal muscle and limits exercise capacity. Represses the transcriptional activity of NR1I2. This Rattus norvegicus (Rat) protein is Cryptochrome-2 (Cry2).